We begin with the raw amino-acid sequence, 465 residues long: ATP synthase subunit beta (465 aa).

Position 151-158 (151-158) interacts with ATP; sequence GGAGVGKT.

Belongs to the ATPase alpha/beta chains family. F-type ATPases have 2 components, CF(1) - the catalytic core - and CF(0) - the membrane proton channel. CF(1) has five subunits: alpha(3), beta(3), gamma(1), delta(1), epsilon(1). CF(0) has four main subunits: a(1), b(1), b'(1) and c(9-12).

The protein localises to the cell inner membrane. The catalysed reaction is ATP + H2O + 4 H(+)(in) = ADP + phosphate + 5 H(+)(out). Produces ATP from ADP in the presence of a proton gradient across the membrane. The catalytic sites are hosted primarily by the beta subunits. This chain is ATP synthase subunit beta, found in Chloroherpeton thalassium (strain ATCC 35110 / GB-78).